We begin with the raw amino-acid sequence, 239 residues long: Cysteine-rich venom protein 2 (239 aa).

Positions 1–19 (MIALIVLPILAAVLQQSSG) are cleaved as a signal peptide. The SCP domain occupies 38–166 (VDLHNSLRRS…EYSYFYVCQY (129 aa)). 7 disulfides stabilise this stretch: Cys75–Cys153, Cys92–Cys167, Cys148–Cys164, Cys186–Cys193, Cys189–Cys198, Cys202–Cys234, and Cys219–Cys232. One can recognise a ShKT domain in the interval 198–234 (CTNPCPKKISTQLPRFGPQAGCQDKQMQSDCSATCFC).

It belongs to the CRISP family. In terms of tissue distribution, expressed by the venom gland.

The protein resides in the secreted. In terms of biological role, weakly blocks contraction of smooth muscle elicited by high potassium-induced depolarization, but does not block caffeine-stimulated contraction. May target voltage-gated calcium channels on smooth muscle. The protein is Cysteine-rich venom protein 2 of Sistrurus catenatus edwardsii (Desert massasauga).